The primary structure comprises 564 residues: MDFGSLETVVANSAFIAARGSFDGSSTPSSRDKKYLAKLRLPPLSKCEGLRDSISLEFDNLCSEQPIGKRLFQQFLKTDERHVPALELWKDIEDYDTADDDLRPQKAQAILAEYLDPQGTLFCNFLDQGMVARVKEGPTGSQDGLFQPLLQATLEHLSQGPFQEYLGSLYFLRFLQWKWLEAQPIGEDWFLDFRVLGKGGFGEVSACQMKATGKMYACKKLNKKRLKKRKGYQGAIVEKRILAKVHSRFIVSLAYAFETKTDLCLVMTIMNGGDVRYHIYNVDEENPGFPEPRAIYYTAQIISGLEHLHQRRIVYRDLKPENVLLDNDGNIRISDLGLAVELKEGQNKTKGYAGTPGFMAPELLRGEEYDFSVDYFALGVTLYEMIAARGPFRARGEKVENKELKQRIISEPVKYPEKFSQASKDFCEQLLEKDPEKRLGFRDGTCDALRANVLFKDISWRQLEAGMLIPPFIPDSRTVYAKNIQDVGAFSTVKGVVFDKADTEFFQEFASGNCSIPWQEEMIETGFFGDLNVWRPDGQMPDDMKGITVEEAAPTAKSGMCLIS.

An interaction with RCVRN region spans residues 1 to 15 (MDFGSLETVVANSAF). The tract at residues 1–189 (MDFGSLETVV…LEAQPIGEDW (189 aa)) is N-terminal. Serine 5 is modified (phosphoserine). Threonine 8 carries the post-translational modification Phosphothreonine. Serine 21 is modified (phosphoserine; by PKA and autocatalysis). Residues 58 to 175 (FDNLCSEQPI…LGSLYFLRFL (118 aa)) form the RGS domain. Residues 190-455 (FLDFRVLGKG…CDALRANVLF (266 aa)) form the Protein kinase domain. ATP-binding positions include 196–204 (LGKGGFGEV) and lysine 219. Aspartate 317 (proton acceptor) is an active-site residue. An AGC-kinase C-terminal domain is found at 456-521 (KDISWRQLEA…GNCSIPWQEE (66 aa)). Residues 456–564 (KDISWRQLEA…TAKSGMCLIS (109 aa)) form a C-terminal region. A Phosphoserine; by autocatalysis modification is found at serine 491. Threonine 492 carries the post-translational modification Phosphothreonine; by autocatalysis. Cysteine 561 carries the cysteine methyl ester modification. Cysteine 561 carries S-farnesyl cysteine lipidation. Positions 562-564 (LIS) are cleaved as a propeptide — removed in mature form.

It belongs to the protein kinase superfamily. AGC Ser/Thr protein kinase family. GPRK subfamily. Interacts (via N-terminus) with RCVRN (via C-terminus); the interaction is Ca(2+)-dependent. Interacts (when prenylated) with PDE6D; this promotes release from membranes. May form a complex composed of RHO, GRK1 and RCVRN in a Ca(2+)-dependent manner; RCVRN prevents the interaction between GRK1 and RHO. In terms of processing, autophosphorylated, Ser-21 is a minor site of autophosphorylation compared to Ser-491 and Thr-492. Phosphorylation at Ser-21 is regulated by light and activated by cAMP. Farnesylation is required for full activity. In terms of tissue distribution, detected in retina (at protein level). Retina-specific. Expressed in rod and cone photoreceptor cells.

It is found in the membrane. Its subcellular location is the cell projection. The protein resides in the cilium. It localises to the photoreceptor outer segment. The catalysed reaction is L-threonyl-[rhodopsin] + ATP = O-phospho-L-threonyl-[rhodopsin] + ADP + H(+). The enzyme catalyses L-seryl-[rhodopsin] + ATP = O-phospho-L-seryl-[rhodopsin] + ADP + H(+). Its activity is regulated as follows. Inhibited by RCVRN, which prevents the interaction between GRK1 and RHO. Inhibition is calcium-dependent. Functionally, retina-specific kinase involved in the signal turnoff via phosphorylation of rhodopsin (RHO), the G protein- coupled receptor that initiates the phototransduction cascade. This rapid desensitization is essential for scotopic vision and permits rapid adaptation to changes in illumination. May play a role in the maintenance of the outer nuclear layer in the retina. This chain is Rhodopsin kinase GRK1, found in Rattus norvegicus (Rat).